The sequence spans 60 residues: Sperm protamine P1 (60 aa).

The tract at residues 1 to 60 (MARYRHSRSRSRSRYRRRRRRRSRYRSQRRRYRGRRRRRSRRGRRRGYSRRRYSRRRRRY) is disordered.

The protein belongs to the protamine P1 family. In terms of tissue distribution, testis.

Its subcellular location is the nucleus. It is found in the chromosome. In terms of biological role, protamines substitute for histones in the chromatin of sperm during the haploid phase of spermatogenesis. They compact sperm DNA into a highly condensed, stable and inactive complex. This Osphranter rufus (Red kangaroo) protein is Sperm protamine P1 (PRM1).